Here is a 402-residue protein sequence, read N- to C-terminus: MDTKFDDVLTGEQKLRNFNINFGPQHPAAHGVLRLVLELDGEVVERCDPHIGLLHRGTEKLMETRTYLQNLPYFDRLDYVAPMNQEHAWCLAIERLTGVQVPRRASLIRVLYSEIGRVLNHLLNVTTQAMDVGALTPPLWGFEEREKLMVFYERASGARLHAAYFRPGGVHQDLTPRLIEDIEEWAEHFPKVLDDLDGLLTENRIFKQRNVDIGVVTEKDILDWGFSGVMVRGSGLAWDLRRSQPYECYDEFDFQIPVGKNGDCYDRYLCRMEEMRQSTRIIQQCLAKLRVEKGDVLARGKITPPPRAEMKTSMEALIHHFKLYTEGFHVPAGEVYAAVEAPKGEFGVYLVADGTNRPYRAKIRAPGFLHLQAIDYIAKGHLLADVSAIIGTLDVVFGEIDR.

It belongs to the complex I 49 kDa subunit family. In terms of assembly, NDH-1 is composed of 14 different subunits. Subunits NuoB, C, D, E, F, and G constitute the peripheral sector of the complex.

It localises to the cell inner membrane. It carries out the reaction a quinone + NADH + 5 H(+)(in) = a quinol + NAD(+) + 4 H(+)(out). Functionally, NDH-1 shuttles electrons from NADH, via FMN and iron-sulfur (Fe-S) centers, to quinones in the respiratory chain. The immediate electron acceptor for the enzyme in this species is believed to be ubiquinone. Couples the redox reaction to proton translocation (for every two electrons transferred, four hydrogen ions are translocated across the cytoplasmic membrane), and thus conserves the redox energy in a proton gradient. This Cereibacter sphaeroides (strain ATCC 17025 / ATH 2.4.3) (Rhodobacter sphaeroides) protein is NADH-quinone oxidoreductase subunit D.